Reading from the N-terminus, the 120-residue chain is Seripauperin-13 (120 aa).

The signal sequence occupies residues 1–25 (MVKLTSIAAGVAAIAATASATTTLA).

Belongs to the SRP1/TIP1 family. Seripauperin subfamily.

The chain is Seripauperin-13 (PAU13) from Saccharomyces cerevisiae (strain ATCC 204508 / S288c) (Baker's yeast).